A 123-amino-acid chain; its full sequence is Large ribosomal subunit protein uL29 (123 aa).

Belongs to the universal ribosomal protein uL29 family. Component of the large ribosomal subunit.

Its subcellular location is the cytoplasm. Functionally, component of the large ribosomal subunit. The ribosome is a large ribonucleoprotein complex responsible for the synthesis of proteins in the cell. The protein is Large ribosomal subunit protein uL29 (rpl35) of Xenopus tropicalis (Western clawed frog).